The sequence spans 465 residues: Serine carboxypeptidase 24 (465 aa).

The first 24 residues, 1–24 (MARTHFIFLLLVALLSTTFPSSSS), serve as a signal peptide directing secretion. N-linked (GlcNAc...) asparagine glycans are attached at residues asparagine 54, asparagine 105, and asparagine 139. 3 disulfide bridges follow: cysteine 88–cysteine 349, cysteine 249–cysteine 260, and cysteine 285–cysteine 317. The active site involves serine 181. Residues asparagine 250, asparagine 293, and asparagine 338 are each glycosylated (N-linked (GlcNAc...) asparagine). Residues 287–316 (AAQQKKNTTGFFVRMKNTLLRRRLVSGYDP) constitute a propeptide, linker peptide. Active-site residues include aspartate 386 and histidine 438.

Belongs to the peptidase S10 family. In terms of assembly, heterodimer. In terms of processing, N-glycosylated. As to expression, expressed in shoots, leaves, cauline leaves, siliques and flowers. Expressed a low levels in roots and stems.

It is found in the secreted. The protein localises to the extracellular space. The enzyme catalyses Preferential release of a C-terminal arginine or lysine residue.. With respect to regulation, completely inhibited by phenylmethylsulfonyl fluoride (PMSF) and partially by leupeptin. Functionally, active serine carboxypeptidase with broad substrate preference, including basic and hydrophilic groups. Processes a protein involved in an early event in the brassinosteroid signaling pathway. The polypeptide is Serine carboxypeptidase 24 (SCPL24) (Arabidopsis thaliana (Mouse-ear cress)).